A 183-amino-acid polypeptide reads, in one-letter code: Der GTPase-activating protein YihI (183 aa).

Residues 1–101 form a disordered region; the sequence is MSRSKKTRKG…KLTDEQKLLK (101 aa). 2 stretches are compositionally biased toward basic and acidic residues: residues 22-46 and 92-101; these read KKQDRAEVTGKRAEKGNKSGSRHNE and KLTDEQKLLK.

Belongs to the YihI family. As to quaternary structure, interacts with Der.

Functionally, a GTPase-activating protein (GAP) that modifies Der/EngA GTPase function. May play a role in ribosome biogenesis. This is Der GTPase-activating protein YihI from Shewanella oneidensis (strain ATCC 700550 / JCM 31522 / CIP 106686 / LMG 19005 / NCIMB 14063 / MR-1).